Here is a 101-residue protein sequence, read N- to C-terminus: MAKQSMKNRELKRQRTVAKFAQKRAALKAIIASPESTPEARWEAQVALQKQPRDASASRLRNRCRLTGRPHGVYRKFGLARNMLRQAAMRGDVPGLVKASW.

Belongs to the universal ribosomal protein uS14 family. As to quaternary structure, part of the 30S ribosomal subunit. Contacts proteins S3 and S10.

Binds 16S rRNA, required for the assembly of 30S particles and may also be responsible for determining the conformation of the 16S rRNA at the A site. The sequence is that of Small ribosomal subunit protein uS14 from Stutzerimonas stutzeri (strain A1501) (Pseudomonas stutzeri).